A 311-amino-acid chain; its full sequence is HTH-type transcriptional regulator DsdC (311 aa).

In terms of domain architecture, HTH lysR-type spans 15 to 72 (WQLSKMHTFEVAARHQSFALAAEELSLSPSAVSHRINQLEEELGIQLFVRSHRKVELT). Positions 32-51 (FALAAEELSLSPSAVSHRIN) form a DNA-binding region, H-T-H motif.

It belongs to the LysR transcriptional regulatory family.

Functionally, regulates the expression of the dsdX-dsdA operon. The chain is HTH-type transcriptional regulator DsdC from Escherichia coli (strain K12).